We begin with the raw amino-acid sequence, 157 residues long: UPF0251 protein CLK_0815 (157 aa).

The protein belongs to the UPF0251 family.

The protein is UPF0251 protein CLK_0815 of Clostridium botulinum (strain Loch Maree / Type A3).